The primary structure comprises 134 residues: Profilin-2 (134 aa).

Cys13 and Cys118 are oxidised to a cystine. Residues 84–100 carry the Involved in PIP2 interaction motif; the sequence is AVIRGKKGSGGITIKET. Phosphothreonine is present on Thr114.

It belongs to the profilin family. In terms of assembly, occurs in many kinds of cells as a complex with monomeric actin in a 1:1 ratio. In terms of processing, phosphorylated by MAP kinases.

Its subcellular location is the cytoplasm. It localises to the cytoskeleton. In terms of biological role, binds to actin and affects the structure of the cytoskeleton. At high concentrations, profilin prevents the polymerization of actin, whereas it enhances it at low concentrations. The polypeptide is Profilin-2 (Olea europaea (Common olive)).